The chain runs to 180 residues: MTLKELLVGFGTQVRSIWMIGLHAFAKRETRMYPEEPVYLPPRYRGRIVLTRDPDGEERCVACNLCAVACPVGCISLQKTETKDGRWYPEFFRINFSRCIFCGLCEEACPTTAIQLTPDFEMGEYKRQDLVYEKEDLLISGPGKYPEYNFYRMAGMAIDGKDKGEAENEAKPIDVKSLLP.

4Fe-4S ferredoxin-type domains lie at 50 to 80 (LTRDPDGEERCVACNLCAVACPVGCISLQKT) and 90 to 119 (EFFRINFSRCIFCGLCEEACPTTAIQLTPD). Positions 60, 63, 66, 70, 99, 102, 105, and 109 each coordinate [4Fe-4S] cluster.

This sequence belongs to the complex I 23 kDa subunit family. In terms of assembly, NDH-1 is composed of 13 different subunits. Subunits NuoA, H, J, K, L, M, N constitute the membrane sector of the complex. Requires [4Fe-4S] cluster as cofactor.

It is found in the cell inner membrane. The enzyme catalyses a quinone + NADH + 5 H(+)(in) = a quinol + NAD(+) + 4 H(+)(out). NDH-1 shuttles electrons from NADH, via FMN and iron-sulfur (Fe-S) centers, to quinones in the respiratory chain. The immediate electron acceptor for the enzyme in this species is believed to be ubiquinone. Couples the redox reaction to proton translocation (for every two electrons transferred, four hydrogen ions are translocated across the cytoplasmic membrane), and thus conserves the redox energy in a proton gradient. The sequence is that of NADH-quinone oxidoreductase subunit I from Shigella dysenteriae serotype 1 (strain Sd197).